The sequence spans 158 residues: Lipoprotein signal peptidase (158 aa).

3 consecutive transmembrane segments (helical) span residues 4-24 (KYYI…DQVT), 63-83 (KMGF…LFYI), and 88-108 (YNLF…GNFI). Residues aspartate 118 and aspartate 136 contribute to the active site. The helical transmembrane segment at 131–151 (IFNVADSSLTIGVLFIIIALL) threads the bilayer.

This sequence belongs to the peptidase A8 family.

Its subcellular location is the cell membrane. It carries out the reaction Release of signal peptides from bacterial membrane prolipoproteins. Hydrolyzes -Xaa-Yaa-Zaa-|-(S,diacylglyceryl)Cys-, in which Xaa is hydrophobic (preferably Leu), and Yaa (Ala or Ser) and Zaa (Gly or Ala) have small, neutral side chains.. Its pathway is protein modification; lipoprotein biosynthesis (signal peptide cleavage). This protein specifically catalyzes the removal of signal peptides from prolipoproteins. This Staphylococcus haemolyticus (strain JCSC1435) protein is Lipoprotein signal peptidase.